The following is a 156-amino-acid chain: Small ribosomal subunit protein uS7 (156 aa).

The protein belongs to the universal ribosomal protein uS7 family. Part of the 30S ribosomal subunit. Contacts proteins S9 and S11.

One of the primary rRNA binding proteins, it binds directly to 16S rRNA where it nucleates assembly of the head domain of the 30S subunit. Is located at the subunit interface close to the decoding center, probably blocks exit of the E-site tRNA. This chain is Small ribosomal subunit protein uS7, found in Solidesulfovibrio magneticus (strain ATCC 700980 / DSM 13731 / RS-1) (Desulfovibrio magneticus).